The following is a 359-amino-acid chain: MKENRKIIHIDMDAFYASIEQRDNPKYKGKPLIVGGDPNRRGVVATCSYEARKYGIHSAMPSLTAYKLCPKAIFIRPRMEVYKKVSRQVMNILNEYSNLVEHLSLDEAFVDVSKSKRCKGSATLMALEIKERIFKEVGLTASAGVSFNKFLAKMASDFRKPDGITVITEENSKDFIRNIPIGKFFGVGRVTKNKLNNIGVFKGEDLLKFSEEELIDIFSDRGKILYEFARGIDNRPVNPYRIRKSIGKEITLREDIEDIDEMIEILERIAERVSESLCLLNKKGKTVTLKVKFNDFKHITRSITLEHFLKEQKEIMECVKDLISIVDFKNKKVRLLGITISSLEENIITEEREQLSFDV.

The UmuC domain maps to Ile-7–Gly-188. Mg(2+)-binding residues include Asp-11 and Asp-106. The active site involves Glu-107.

The protein belongs to the DNA polymerase type-Y family. As to quaternary structure, monomer. The cofactor is Mg(2+).

The protein localises to the cytoplasm. It carries out the reaction DNA(n) + a 2'-deoxyribonucleoside 5'-triphosphate = DNA(n+1) + diphosphate. In terms of biological role, poorly processive, error-prone DNA polymerase involved in untargeted mutagenesis. Copies undamaged DNA at stalled replication forks, which arise in vivo from mismatched or misaligned primer ends. These misaligned primers can be extended by PolIV. Exhibits no 3'-5' exonuclease (proofreading) activity. May be involved in translesional synthesis, in conjunction with the beta clamp from PolIII. The chain is DNA polymerase IV from Clostridium perfringens (strain ATCC 13124 / DSM 756 / JCM 1290 / NCIMB 6125 / NCTC 8237 / Type A).